The sequence spans 249 residues: uncharacterized protein (249 aa).

Residues 30-65 are a coiled coil; the sequence is KVDKLKKLEIKKLEDQKKLKEQEEKHRLTLIRLANA. Residues 66-97 are disordered; it reads PPQTNSINNNNNNNNNIKTNRPPLIYGEDKDK.

This is an uncharacterized protein from Dictyostelium discoideum (Social amoeba).